A 211-amino-acid chain; its full sequence is Bacteriorhodopsin (211 aa).

A helical membrane pass occupies residues 1 to 19 (IWLWLGTAGMFLGMLYFIA). The Cytoplasmic segment spans residues 20-33 (RGWGETDSRRQKFY). Residues 34 to 52 (IATILITAIAFVNYLAMAL) traverse the membrane as a helical segment. Residues 53–68 (GFGLTIVEFAGEEHPI) lie on the Extracellular side of the membrane. A helical transmembrane segment spans residues 69–86 (YWARYSDWLFTTPLLLYD). Residues 87 to 97 (LGLLAGADRNT) lie on the Cytoplasmic side of the membrane. Residues 98–117 (ITSLVSLDVLMIGTGLVATL) form a helical membrane-spanning segment. Residues 118 to 130 (SAGSGVLSAGAER) lie on the Extracellular side of the membrane. A helical membrane pass occupies residues 131 to 150 (LVWWGISTAFLLVLLYFLFS). The Cytoplasmic segment spans residues 151–168 (SLSGRVADLPSDTRSTFK). The helical transmembrane segment at 169 to 187 (TLRNLVTVVWLVYPVWWLI) threads the bilayer. Residues 188–199 (GTEGIGLVGIGI) are Extracellular-facing. A helical transmembrane segment spans residues 200 to 211 (ETAGFMVIDLTA).

This sequence belongs to the archaeal/bacterial/fungal opsin family.

It is found in the cell membrane. Functionally, light-driven proton pump. The polypeptide is Bacteriorhodopsin (bop) (Halobacterium halobium (strain port)).